Reading from the N-terminus, the 328-residue chain is Complex I intermediate-associated protein 30, mitochondrial (328 aa).

The transit peptide at 1-24 (MSSIHKLLTGIYIHKNFLRPRAAL) directs the protein to the mitochondrion. Residues 44–54 (VTSVDRASQQG) are compositionally biased toward polar residues. The interval 44–80 (VTSVDRASQQGKTEEGLQGHDHKEVALDAPSPDRTPE) is disordered. The segment covering 55-69 (KTEEGLQGHDHKEVA) has biased composition (basic and acidic residues). A Phosphoserine modification is found at Ser-319.

It belongs to the CIA30 family. In terms of assembly, part of the mitochondrial complex I assembly/MCIA complex that comprises at least the core subunits TMEM126B, NDUFAF1, ECSIT and ACAD9 and complement subunits such as COA1 and TMEM186. Interacts with ECSIT. Interacts with ACAD9. At early stages of complex I assembly, it is found in intermediate subcomplexes that contain different subunits including NDUFB6, NDUFA6, NDUFA9, NDUFS3, NDUFS7, ND1, ND2 and ND3. Interacts with TMEM70 and TMEM242.

It localises to the mitochondrion. The protein localises to the mitochondrion matrix. In terms of biological role, as part of the MCIA complex, involved in the assembly of the mitochondrial complex I. This chain is Complex I intermediate-associated protein 30, mitochondrial, found in Mus musculus (Mouse).